Reading from the N-terminus, the 82-residue chain is ATP synthase subunit c, chloroplastic (82 aa).

2 helical membrane-spanning segments follow: residues glycine 7–glycine 27 and leucine 57–alanine 77.

It belongs to the ATPase C chain family. F-type ATPases have 2 components, F(1) - the catalytic core - and F(0) - the membrane proton channel. F(1) has five subunits: alpha(3), beta(3), gamma(1), delta(1), epsilon(1). F(0) has four main subunits: a(1), b(1), b'(1) and c(10-14). The alpha and beta chains form an alternating ring which encloses part of the gamma chain. F(1) is attached to F(0) by a central stalk formed by the gamma and epsilon chains, while a peripheral stalk is formed by the delta, b and b' chains.

Its subcellular location is the plastid. It is found in the chloroplast thylakoid membrane. In terms of biological role, f(1)F(0) ATP synthase produces ATP from ADP in the presence of a proton or sodium gradient. F-type ATPases consist of two structural domains, F(1) containing the extramembraneous catalytic core and F(0) containing the membrane proton channel, linked together by a central stalk and a peripheral stalk. During catalysis, ATP synthesis in the catalytic domain of F(1) is coupled via a rotary mechanism of the central stalk subunits to proton translocation. Its function is as follows. Key component of the F(0) channel; it plays a direct role in translocation across the membrane. A homomeric c-ring of between 10-14 subunits forms the central stalk rotor element with the F(1) delta and epsilon subunits. This Emiliania huxleyi (Coccolithophore) protein is ATP synthase subunit c, chloroplastic.